The following is a 110-amino-acid chain: Single-stranded DNA-binding protein 1 (110 aa).

Residues 1-104 form the SSB domain; that stretch reads MNKILLIGRM…VVGEEVQFLE (104 aa).

As to quaternary structure, homotetramer.

The chain is Single-stranded DNA-binding protein 1 (ssb1) from Clostridium acetobutylicum (strain ATCC 824 / DSM 792 / JCM 1419 / IAM 19013 / LMG 5710 / NBRC 13948 / NRRL B-527 / VKM B-1787 / 2291 / W).